We begin with the raw amino-acid sequence, 146 residues long: NADH-ubiquinone oxidoreductase chain 6 (146 aa).

The next 4 helical transmembrane spans lie at 10–30 (ILAI…LLFV), 43–63 (LMGI…FLFI), 81–101 (VIVL…PIAI), and 124–144 (APML…AIAM).

Belongs to the complex I subunit 6 family.

It localises to the mitochondrion membrane. The enzyme catalyses a ubiquinone + NADH + 5 H(+)(in) = a ubiquinol + NAD(+) + 4 H(+)(out). Its function is as follows. Core subunit of the mitochondrial membrane respiratory chain NADH dehydrogenase (Complex I) that is believed to belong to the minimal assembly required for catalysis. Complex I functions in the transfer of electrons from NADH to the respiratory chain. The immediate electron acceptor for the enzyme is believed to be ubiquinone. This chain is NADH-ubiquinone oxidoreductase chain 6 (NAD6), found in Candida albicans (strain SC5314 / ATCC MYA-2876) (Yeast).